The following is a 236-amino-acid chain: TVP38/TMEM64 family membrane protein YdjX (236 aa).

The next 5 membrane-spanning stretches (helical) occupy residues 7–27 (FLFA…FGLF), 50–70 (LYIL…ILVI), 72–92 (GGIV…ATLA), 156–176 (IAFW…IVIY), and 192–212 (FILQ…LAKL). Residues 73 to 183 (GIVFGPLLGT…VIYTVMASDL (111 aa)) are VTT domain.

Belongs to the TVP38/TMEM64 family.

The protein resides in the cell membrane. The polypeptide is TVP38/TMEM64 family membrane protein YdjX (ydjX) (Escherichia coli (strain K12)).